A 379-amino-acid chain; its full sequence is Fructose-1,6-bisphosphate aldolase/phosphatase (379 aa).

Asp13 (proton acceptor; for FBP phosphatase activity) is an active-site residue. Residues Asp13, His20, Asp51, and Asp52 each coordinate Mg(2+). His20 lines the beta-D-fructose 1,6-bisphosphate pocket. His20 lines the dihydroxyacetone phosphate pocket. Tyr89 serves as a coordination point for beta-D-fructose 1,6-bisphosphate. Mg(2+) is bound at residue Gln93. Position 102 to 103 (102 to 103 (GN)) interacts with beta-D-fructose 1,6-bisphosphate. Mg(2+) is bound at residue Asp130. Lys131 contributes to the beta-D-fructose 1,6-bisphosphate binding site. Lys131 is a dihydroxyacetone phosphate binding site. Tyr227 acts as the Proton donor/acceptor; for FBP aldolase activity in catalysis. Mg(2+) is bound by residues Lys230, Asp231, and Asp232. Lys230 acts as the Schiff-base intermediate with DHAP; for FBP aldolase activity in catalysis. Beta-D-fructose 1,6-bisphosphate is bound by residues 240 to 241 (QS), Arg264, Asp285, and Tyr346. Residues Arg264 and Asp285 each contribute to the dihydroxyacetone phosphate site.

The protein belongs to the FBP aldolase/phosphatase family. As to quaternary structure, homooctamer; dimer of tetramers. Mg(2+) is required as a cofactor.

It catalyses the reaction beta-D-fructose 1,6-bisphosphate + H2O = beta-D-fructose 6-phosphate + phosphate. The catalysed reaction is beta-D-fructose 1,6-bisphosphate = D-glyceraldehyde 3-phosphate + dihydroxyacetone phosphate. The protein operates within carbohydrate biosynthesis; gluconeogenesis. Functionally, catalyzes two subsequent steps in gluconeogenesis: the aldol condensation of dihydroxyacetone phosphate (DHAP) and glyceraldehyde-3-phosphate (GA3P) to fructose-1,6-bisphosphate (FBP), and the dephosphorylation of FBP to fructose-6-phosphate (F6P). This is Fructose-1,6-bisphosphate aldolase/phosphatase from Moorella thermoacetica (strain ATCC 39073 / JCM 9320).